The following is a 500-amino-acid chain: Probable cytosol aminopeptidase (500 aa).

K264 and D269 together coordinate Mn(2+). K276 is a catalytic residue. Positions 287, 346, and 348 each coordinate Mn(2+). R350 is an active-site residue.

This sequence belongs to the peptidase M17 family. Requires Mn(2+) as cofactor.

It is found in the cytoplasm. The catalysed reaction is Release of an N-terminal amino acid, Xaa-|-Yaa-, in which Xaa is preferably Leu, but may be other amino acids including Pro although not Arg or Lys, and Yaa may be Pro. Amino acid amides and methyl esters are also readily hydrolyzed, but rates on arylamides are exceedingly low.. It carries out the reaction Release of an N-terminal amino acid, preferentially leucine, but not glutamic or aspartic acids.. In terms of biological role, presumably involved in the processing and regular turnover of intracellular proteins. Catalyzes the removal of unsubstituted N-terminal amino acids from various peptides. This Rhodopseudomonas palustris (strain ATCC BAA-98 / CGA009) protein is Probable cytosol aminopeptidase.